The following is a 354-amino-acid chain: Putative succinyl-diaminopimelate desuccinylase DapE (354 aa).

His-69 serves as a coordination point for Zn(2+). Residue Asp-71 is part of the active site. Asp-95 is a Zn(2+) binding site. Glu-125 acts as the Proton acceptor in catalysis. Zn(2+) contacts are provided by Glu-126, Glu-154, and His-330.

It belongs to the peptidase M20A family. In terms of assembly, homodimer. The cofactor is Zn(2+). Requires Co(2+) as cofactor.

The catalysed reaction is N-succinyl-(2S,6S)-2,6-diaminopimelate + H2O = (2S,6S)-2,6-diaminopimelate + succinate. It participates in amino-acid biosynthesis; L-lysine biosynthesis via DAP pathway; LL-2,6-diaminopimelate from (S)-tetrahydrodipicolinate (succinylase route): step 3/3. Its function is as follows. Catalyzes the hydrolysis of N-succinyl-L,L-diaminopimelic acid (SDAP), forming succinate and LL-2,6-diaminoheptanedioate (DAP), an intermediate involved in the bacterial biosynthesis of lysine and meso-diaminopimelic acid. This chain is Putative succinyl-diaminopimelate desuccinylase DapE (dapE), found in Mycobacterium tuberculosis (strain CDC 1551 / Oshkosh).